A 504-amino-acid chain; its full sequence is Anaerobic nitric oxide reductase transcription regulator NorR (504 aa).

Position 57 is a 4-aspartylphosphate (Asp57). Residues 187-416 enclose the Sigma-54 factor interaction domain; it reads MIGLSPGMTQ…LEHAIHRAVV (230 aa). Residues 215–222 and 278–287 contribute to the ATP site; these read GETGTGKE and ADNGTLFLDE. The segment at residues 479-498 is a DNA-binding region (H-T-H motif); sequence WAACARMLETDVANLHRLAK.

It participates in nitrogen metabolism; nitric oxide reduction. Its function is as follows. Required for the expression of anaerobic nitric oxide (NO) reductase, acts as a transcriptional activator for at least the norVW operon. Activation also requires sigma-54. The polypeptide is Anaerobic nitric oxide reductase transcription regulator NorR (Escherichia coli O139:H28 (strain E24377A / ETEC)).